The primary structure comprises 264 residues: ATP synthase subunit a (264 aa).

Transmembrane regions (helical) follow at residues 29–49 (TWHI…LWLF), 89–109 (VIAP…FMDM), 134–154 (DLNI…YYSI), 177–197 (IPVN…SLAL), 208–228 (LIFI…ALGV), and 235–255 (LIFH…LTIV).

This sequence belongs to the ATPase A chain family. F-type ATPases have 2 components, CF(1) - the catalytic core - and CF(0) - the membrane proton channel. CF(1) has five subunits: alpha(3), beta(3), gamma(1), delta(1), epsilon(1). CF(0) has three main subunits: a(1), b(2) and c(9-12). The alpha and beta chains form an alternating ring which encloses part of the gamma chain. CF(1) is attached to CF(0) by a central stalk formed by the gamma and epsilon chains, while a peripheral stalk is formed by the delta and b chains.

Its subcellular location is the cell inner membrane. In terms of biological role, key component of the proton channel; it plays a direct role in the translocation of protons across the membrane. The sequence is that of ATP synthase subunit a from Shewanella sediminis (strain HAW-EB3).